Consider the following 239-residue polypeptide: MPIKKPCLKLNLDSLNVVRSEIPQMLSANERLKNNFNILYNQIRQYPAYYFKVASNVPTYSDICQSFSVMYQGFQIVNHSGDVFIHACRENPQSKGDFVGDKFHISIAREQVPLAFQILSGLLFSEDSPIDKWKITDMNRVSQQSRVGIGAQFTLYVKSDQECSQYSALLLHKIRQFIMCLESNLLRSKIAPGEYPASDVRPEDWKYVSYRNELRSDRDGSERQEQMLREEPFYRLMIE.

The Proton donor role is filled by His104. Lys134 serves as the catalytic Proton acceptor.

It belongs to the phosphothreonine lyase family.

The protein localises to the secreted. Its activity is regulated as follows. Inhibited by the tyrosine phosphatase inhibitor vanadate. Its function is as follows. Catalyzes the removal of the phosphate group from the phosphothreonine in the mitogen-activated protein kinases such as MAPK2/ERK2, MAPK3/ERK1, MAPK8 and MAPK14 in an irreversible reaction, thus preventing the downstream phosphorylation of histone H3. This epigenetic modification results in inhibition of the transcription of a specific subset of pro-inflammatory genes, and ultimately to a reduced immune response against the invading pathogen. The diminished immune response enhances the bacterium's ability to disseminate and multiply within the host. In Shigella flexneri, this protein is Phosphothreonine lyase OspF (ospF).